The chain runs to 83 residues: Cytotoxin A5 (83 aa).

An N-terminal signal peptide occupies residues 1–21; sequence MKTLLLTMVVVTIVCLDLGYT. Intrachain disulfides connect Cys24/Cys43, Cys36/Cys61, Cys65/Cys76, and Cys77/Cys82.

It belongs to the three-finger toxin family. Short-chain subfamily. Orphan group XV sub-subfamily. Expressed by the venom gland.

The protein localises to the secreted. Its subcellular location is the target cell membrane. Functionally, non-cytotoxic protein that does not show lytic and hemolytic activities, but can induce aggregation and fusion of sphingomyelin vesicles. It binds to integrin alpha-V/beta-3 (ITGAV/ITGB3) with high affinity, and it inhibits osteoclast differentiation and bone resorption in mice, probably due to binding to integrin alpha-V/beta-3. This Naja atra (Chinese cobra) protein is Cytotoxin A5.